The sequence spans 237 residues: Sugar fermentation stimulation protein homolog (237 aa).

Belongs to the SfsA family.

The chain is Sugar fermentation stimulation protein homolog from Actinobacillus pleuropneumoniae serotype 5b (strain L20).